The following is a 1641-amino-acid chain: Alpha-2-macroglobulin (1641 aa).

An N-terminal signal peptide occupies residues 1 to 31; the sequence is MRDRVAMMLRPLVRGWIPRAVLLLTVAFSFG. A lipid anchor (N-palmitoyl cysteine) is attached at cysteine 32. Residue cysteine 32 is the site of S-diacylglycerol cysteine attachment. The isoglutamyl cysteine thioester (Cys-Gln) cross-link spans 1166 to 1169; sequence CAEQ.

This sequence belongs to the protease inhibitor I39 (alpha-2-macroglobulin) family. Bacterial alpha-2-macroglobulin subfamily.

It localises to the cell membrane. Its function is as follows. Protects the bacterial cell from host peptidases. This is Alpha-2-macroglobulin from Xylella fastidiosa (strain 9a5c).